Here is a 228-residue protein sequence, read N- to C-terminus: N-acetyltransferase family 8 member 3 (228 aa).

Helical transmembrane passes span 36 to 56 (MLLLPGTLLILLGVPLTLFLA) and 58 to 78 (GSWLLVLLSTLTLLVSLWLLA). Residues 61 to 217 (LLVLLSTLTL…RNSPMICLKY (157 aa)) enclose the N-acetyltransferase domain.

The protein belongs to the camello family.

The protein localises to the nucleus membrane. It is found in the cytoplasm. It localises to the perinuclear region. The catalysed reaction is L-lysyl-[protein] + acetyl-CoA = N(6)-acetyl-L-lysyl-[protein] + CoA + H(+). In terms of biological role, has histone acetyltransferase activity in vitro, with specificity for histone H4. The sequence is that of N-acetyltransferase family 8 member 3 from Rattus norvegicus (Rat).